The sequence spans 185 residues: Anaphase-promoting complex subunit 10 (185 aa).

Position 2 is an N-acetylthreonine (threonine 2). Residues threonine 2 to arginine 185 form the DOC domain. At lysine 169 the chain carries N6-acetyllysine.

It belongs to the APC10 family. In terms of assembly, the mammalian APC/C is composed at least of 14 distinct subunits ANAPC1, ANAPC2, CDC27/APC3, ANAPC4, ANAPC5, CDC16/APC6, ANAPC7, CDC23/APC8, ANAPC10, ANAPC11, CDC26/APC12, ANAPC13, ANAPC15 and ANAPC16 that assemble into a complex of at least 19 chains with a combined molecular mass of around 1.2 MDa; APC/C interacts with FZR1 and FBXO5. The C-terminus of APC10 binds to CDC27/APC3. Interacts with PIWIL1; interaction only takes place when PIWIL1 binds piRNA. Interacts with FBXO43; the interaction is direct.

It functions in the pathway protein modification; protein ubiquitination. In terms of biological role, component of the anaphase promoting complex/cyclosome (APC/C), a cell cycle-regulated E3 ubiquitin ligase that controls progression through mitosis and the G1 phase of the cell cycle. The APC/C complex acts by mediating ubiquitination and subsequent degradation of target proteins: it mainly mediates the formation of 'Lys-11'-linked polyubiquitin chains and, to a lower extent, the formation of 'Lys-48'- and 'Lys-63'-linked polyubiquitin chains. The APC/C complex catalyzes assembly of branched 'Lys-11'-/'Lys-48'-linked branched ubiquitin chains on target proteins. This chain is Anaphase-promoting complex subunit 10 (ANAPC10), found in Homo sapiens (Human).